The sequence spans 119 residues: Large ribosomal subunit protein uL18 (119 aa).

The protein belongs to the universal ribosomal protein uL18 family. As to quaternary structure, part of the 50S ribosomal subunit; part of the 5S rRNA/L5/L18/L25 subcomplex. Contacts the 5S and 23S rRNAs.

This is one of the proteins that bind and probably mediate the attachment of the 5S RNA into the large ribosomal subunit, where it forms part of the central protuberance. The chain is Large ribosomal subunit protein uL18 from Helicobacter pylori (strain HPAG1).